Here is a 402-residue protein sequence, read N- to C-terminus: MSLVLQARRSGKYFLLIDNLLVVLGFFVVFPLISIRFVDQLGWAALIVGIALGLRQLLQQGLGIFGGAIADRVGAKPMIISGMLLRAAGFATMAVASEPWILWASCTLSALGGTLFDPPRTALVIKLTRPHERGRFYSLLMMQDSAGAVIGALIGSWLLAYDFHYVCWAGAALFVLAAAWNAWLLPAYRISTIRAPVREGMLRVVRDRRFLTYVLTLTGYYMLAVQVMLMLPIMVNDIAGGPGAVKWMYAIEAALSLTLLYPIARWSEKRFRLEQRLMFGLLLMTLSLFPLGLSTTLQSLFALICCFYLGSIIAEPARETLSASLADARARGSYMGFSRLGLALGGALGYTGGGWMYDMGRSMNMPELPWALLGIIGMLTLALLYWQFSLQVPCATHQPRSS.

The next 10 membrane-spanning stretches (helical) occupy residues 13 to 33 (YFLL…FPLI), 34 to 54 (SIRF…ALGL), 99 to 116 (PWIL…GTLF), 139 to 159 (LLMM…SWLL), 165 to 185 (YVCW…AWLL), 214 to 234 (VLTL…LPIM), 244 to 264 (AVKW…YPIA), 277 to 297 (LMFG…STTL), 340 to 360 (LGLA…YDMG), and 368 to 388 (LPWA…YWQF).

It belongs to the major facilitator superfamily. DHA1 family. MdtH (TC 2.A.1.2.21) subfamily.

It is found in the cell inner membrane. The polypeptide is Multidrug resistance protein MdtH (Edwardsiella ictaluri (strain 93-146)).